Reading from the N-terminus, the 336-residue chain is Glutamyl endopeptidase (336 aa).

An N-terminal signal peptide occupies residues 1-29; it reads MKGKFLKVSSLFVATLTTATLVSSPAANA. Positions 30–68 are excised as a propeptide; it reads LSSKAMDNHPQQTQSSKQQTPKIQKGGNLKPLEQREHAN. Residues 34-61 form a disordered region; it reads AMDNHPQQTQSSKQQTPKIQKGGNLKPL. The segment covering 39-51 has biased composition (low complexity); that stretch reads PQQTQSSKQQTPK. Residues histidine 119, aspartate 161, and serine 237 each act as charge relay system in the active site. The segment at 283 to 336 is disordered; the sequence is FANDDQPNNPDNPDNPNNPDNPNNPDEPNNPDNPNNPDNPDNGDNNNSDNPDAA. The span at 286 to 336 shows a compositional bias: low complexity; that stretch reads DDQPNNPDNPDNPNNPDNPNNPDEPNNPDNPNNPDNPDNGDNNNSDNPDAA. 11 consecutive repeat copies span residues 289 to 291, 292 to 294, 295 to 297, 298 to 300, 301 to 303, 304 to 306, 310 to 312, 313 to 315, 316 to 318, 319 to 321, and 322 to 324. Residues 289–324 form an 11 X 3 AA repeats of P-[DN]-N region; the sequence is PNNPDNPDNPNNPDNPNNPDEPNNPDNPNNPDNPDN.

Belongs to the peptidase S1B family. Proteolytically cleaved by aureolysin (aur). This cleavage leads to the activation of SspA.

The protein localises to the secreted. The catalysed reaction is Preferential cleavage: Glu-|-Xaa, Asp-|-Xaa.. Its function is as follows. Preferentially cleaves peptide bonds on the carboxyl-terminal side of aspartate and glutamate. Along with other extracellular proteases it is involved in colonization and infection of human tissues. Required for proteolytic maturation of thiol protease SspB and inactivation of SspC, an inhibitor of SspB. It is the most important protease for degradation of fibronectin-binding protein (FnBP) and surface protein A, which are involved in adherence to host cells. May also protect bacteria against host defense mechanism by cleaving the immunoglobulin classes IgG, IgA and IgM. May be involved in the stability of secreted lipases. This is Glutamyl endopeptidase (sspA) from Staphylococcus aureus (strain NCTC 8325 / PS 47).